We begin with the raw amino-acid sequence, 875 residues long: MSKSTAEIRQAFLDFFHSKGHQVVASSSLVPNNDPTLLFTNAGMNQFKDVFLGLDKRNYSRATTSQRCVRAGGKHNDLENVGYTARHHTFFEMLGNFSFGDYFKHDAIQFAWELLTGENWFALPKDRLWVTVYETDDEAYEIWEKEVGIPRERIIRIGDNKGAAYASDNFWQMGDTGPCGPCTEIFYDHGDHIWGGPPGSPEEDGDRYIEIWNIVFMQFNRQADGTMEPLPKPSVDTGMGLERIAAVLQHVNSNYEIDLFRTLIEAVAKVTGATDLSNKSLRVIADHIRSCAFLIADGVVPSNENRGYVLRRIIRRAVRHGNMLGAKETFFYKLVGPLIDVMGSAGEELKRQQAQVEQVLKTEEEQFARTLERGLALLDEELAKLSGDTLDGETAFRLYDTYGFPVDLTADVCRERNIKVDEAGFEAAMEEQRRRAREASGFGADYNAMIRVDGASEFKGYDHLELNGKVTALFVDGKAVDAISAGQEAVVVLDQTPFYAESGGQVGDKGELKGAGFAFAVSDTQKYGQAIGHIGTLSTGSLKVGDAVQADVDDARRARIRLNHSATHLMHAALRQILGTHVAQKGSLVNDKVLRFDFSHNEAMKPSEIRAVEDLVNAQIRRNLPVETNIMDLEAAKAKGAMALFGEKYDDRVRVLSMGDFSTELCGGTHASRTGDIGLFRIVSESGTAAGVRRIEAVTGEGAIATLHAESDRLSDIAQLLKGDSQNLGEKVRSVLERTRQLEKELQQLKEQAAAQESANLSSKAVDINGVKLLVSELAGVEPKMLRTMVDDLKNQLGSTVIVLATVAEGKVSLIAGVSKDVTDRVKAGELVGMVAQQVGGKGGGRPDMAQAGGTDAAALPAALASVKGWVSAKL.

Positions 564, 568, 666, and 670 each coordinate Zn(2+).

Belongs to the class-II aminoacyl-tRNA synthetase family. Homotetramer. The cofactor is Zn(2+).

Its subcellular location is the cytoplasm. It carries out the reaction tRNA(Ala) + L-alanine + ATP = L-alanyl-tRNA(Ala) + AMP + diphosphate. Catalyzes the attachment of alanine to tRNA(Ala) in a two-step reaction: alanine is first activated by ATP to form Ala-AMP and then transferred to the acceptor end of tRNA(Ala). Also edits incorrectly charged Ser-tRNA(Ala) and Gly-tRNA(Ala) via its editing domain. The sequence is that of Alanine--tRNA ligase from Citrobacter koseri (strain ATCC BAA-895 / CDC 4225-83 / SGSC4696).